A 173-amino-acid polypeptide reads, in one-letter code: Acireductone dioxygenase (173 aa).

Positions 1–21 (MKFYYHDNDSSVDQCAPHDSG) are disordered. Residues His84, His86, Glu90, and His129 each contribute to the Fe(2+) site. Residues His84, His86, Glu90, and His129 each contribute to the Ni(2+) site.

It belongs to the acireductone dioxygenase (ARD) family. Fe(2+) is required as a cofactor. It depends on Ni(2+) as a cofactor.

The protein resides in the cytoplasm. Its subcellular location is the nucleus. The catalysed reaction is 1,2-dihydroxy-5-(methylsulfanyl)pent-1-en-3-one + O2 = 4-methylsulfanyl-2-oxobutanoate + formate + 2 H(+). It catalyses the reaction 1,2-dihydroxy-5-(methylsulfanyl)pent-1-en-3-one + O2 = 3-(methylsulfanyl)propanoate + CO + formate + 2 H(+). It participates in amino-acid biosynthesis; L-methionine biosynthesis via salvage pathway; L-methionine from S-methyl-5-thio-alpha-D-ribose 1-phosphate: step 5/6. Catalyzes 2 different reactions between oxygen and the acireductone 1,2-dihydroxy-3-keto-5-methylthiopentene (DHK-MTPene) depending upon the metal bound in the active site. Fe-containing acireductone dioxygenase (Fe-ARD) produces formate and 2-keto-4-methylthiobutyrate (KMTB), the alpha-ketoacid precursor of methionine in the methionine recycle pathway. Ni-containing acireductone dioxygenase (Ni-ARD) produces methylthiopropionate, carbon monoxide and formate, and does not lie on the methionine recycle pathway. This is Acireductone dioxygenase from Yarrowia lipolytica (strain CLIB 122 / E 150) (Yeast).